We begin with the raw amino-acid sequence, 869 residues long: Speckle targeted PIP5K1A-regulated poly(A) polymerase (869 aa).

A Matrin-type zinc finger spans residues 16–46; that stretch reads FRCCLCHVTTANRPSLDAHLGGRKHRHLVEL. In terms of domain architecture, RRM spans 56–128; it reads RSVFVSGFPR…HRLRVRPREQ (73 aa). The tract at residues 111 to 147 is disordered; the sequence is QPQHTLGGHRLRVRPREQKEFQSPASKSPKGAAPDSH. ATP is bound at residue Ser205. 2 residues coordinate Mg(2+): Asp216 and Asp218. UTP contacts are provided by Asp216 and Asp218. The tract at residues 252-315 is disordered; the sequence is QALACTPASP…PASPLQEDRG (64 aa). Residues 259 to 269 are compositionally biased toward pro residues; sequence ASPPDSQPPSP. Residues 279–290 show a composition bias toward polar residues; the sequence is TPSSSLAPQTPD. An ATP-binding site is contributed by Asn391. The UTP site is built by Asn391, Arg413, Tyr431, and His548. A PAP-associated domain is found at 490–548; the sequence is LSSLLAQFFSCVSCWDLRGSLLSLREGQALPVAGDLPSNRWEGLRLGPMNLQDPFDLSH. Positions 597–869 are KA1; binds the bulging loops of U6 snRNA but is dispensable for terminal uridylyltransferase activity; sequence SSPSSLLSAT…VFLPQALRNL (273 aa). 2 stretches are compositionally biased toward basic and acidic residues: residues 637–648 and 660–686; these read GTKRLRSDRGGP and LKLDGEEKSCEEGREEQQGYIRDHSED. Disordered stretches follow at residues 637-686 and 720-755; these read GTKR…HSED and LATGEEGQSGHAALAEQGPKGPEAAREGSQGETGRG. 2 positions are modified to phosphoserine: Ser684 and Ser748.

The protein belongs to the DNA polymerase type-B-like family. As to quaternary structure, associates with the cleavage and polyadenylation specificity factor (CPSF) complex. Interacts with CPSF1 and CPSF3; the interaction is direct. Interacts with PIP5K1A. Mg(2+) is required as a cofactor. It depends on Mn(2+) as a cofactor. Phosphorylated by CK1 in the proline-rich (Pro-rich) region.

It localises to the nucleus. Its subcellular location is the nucleolus. The protein resides in the nucleus speckle. The catalysed reaction is RNA(n) + UTP = RNA(n)-3'-uridine ribonucleotide + diphosphate. It carries out the reaction RNA(n) + ATP = RNA(n)-3'-adenine ribonucleotide + diphosphate. Its activity is regulated as follows. Adenylyltransferase activity is specifically phosphatidylinositol 4,5-bisphosphate (PtdIns(4,5)P2). Poly(A) polymerase that creates the 3'-poly(A) tail of specific pre-mRNAs. Localizes to nuclear speckles together with PIP5K1A and mediates polyadenylation of a select set of mRNAs, such as HMOX1. In addition to polyadenylation, it is also required for the 3'-end cleavage of pre-mRNAs: binds to the 3'UTR of targeted pre-mRNAs and promotes the recruitment and assembly of the CPSF complex on the 3'UTR of pre-mRNAs. In addition to adenylyltransferase activity, also has uridylyltransferase activity. However, the ATP ratio is higher than UTP in cells, suggesting that it functions primarily as a poly(A) polymerase. Acts as a specific terminal uridylyltransferase for U6 snRNA in vitro: responsible for a controlled elongation reaction that results in the restoration of the four 3'-terminal UMP-residues found in newly transcribed U6 snRNA. Not involved in replication-dependent histone mRNA degradation. This chain is Speckle targeted PIP5K1A-regulated poly(A) polymerase (TUT1), found in Ailuropoda melanoleuca (Giant panda).